Here is a 380-residue protein sequence, read N- to C-terminus: Protein Wnt-5a (380 aa).

The N-terminal stretch at 1-37 (MKKPIGILSPGVALGTAGGAMSSKFFLMALATFFSFA) is a signal peptide. Positions 38–61 (QVVIEANSWWSLGMNNPVQMSEVH) are excised as a propeptide. A disulfide bridge links C104 with C115. N-linked (GlcNAc...) asparagine glycans are attached at residues N114 and N120. 10 disulfide bridges follow: C154-C162, C164-C182, C238-C252, C240-C247, C309-C340, C325-C335, C339-C379, C355-C370, C357-C367, and C362-C363. S244 is lipidated: O-palmitoleoyl serine; by PORCN. 2 N-linked (GlcNAc...) asparagine glycosylation sites follow: N312 and N326.

The protein belongs to the Wnt family. As to quaternary structure, forms a soluble 1:1 complex with AFM; this prevents oligomerization and is required for prolonged biological activity. The complex with AFM may represent the physiological form in body fluids. Homooligomer; disulfide-linked, leading to inactivation (in vitro). Interacts with PORCN. Interacts with WLS. Interacts with glypican GCP3. Interacts with PKD1 (via extracellular domain). Interacts with TMEM67. Post-translationally, glycosylation is necessary for secretion but not for activity. Palmitoleoylation is required for efficient binding to frizzled receptors. Depalmitoleoylation leads to Wnt signaling pathway inhibition. In terms of processing, proteolytic processing by TIKI1 and TIKI2 promotes oxidation and formation of large disulfide-bond oligomers, leading to inactivation of WNT5A.

The protein resides in the secreted. It localises to the extracellular space. It is found in the extracellular matrix. Ligand for members of the frizzled family of seven transmembrane receptors. Can activate or inhibit canonical Wnt signaling, depending on receptor context. In the presence of FZD4, activates beta-catenin signaling. In the presence of ROR2, inhibits the canonical Wnt pathway by promoting beta-catenin degradation through a GSK3-independent pathway which involves down-regulation of beta-catenin-induced reporter gene expression. Suppression of the canonical pathway allows chondrogenesis to occur and inhibits tumor formation. Stimulates cell migration. Decreases proliferation, migration, invasiveness and clonogenicity of carcinoma cells and may act as a tumor suppressor. Mediates motility of melanoma cells. Required during embryogenesis for extension of the primary anterior-posterior axis and for outgrowth of limbs and the genital tubercle. Inhibits type II collagen expression in chondrocytes. The polypeptide is Protein Wnt-5a (Wnt5a) (Rattus norvegicus (Rat)).